Consider the following 120-residue polypeptide: NAD(P)H-quinone oxidoreductase subunit 3 (120 aa).

3 helical membrane passes run 2–22 (FVLTGYEYFLGFLFICSLVPV), 64–84 (MFALVFVVFDVETVFLYPWAV), and 89–109 (LGLLAFVEALIFIAILVVALV).

The protein belongs to the complex I subunit 3 family. NDH-1 can be composed of about 15 different subunits; different subcomplexes with different compositions have been identified which probably have different functions.

It localises to the cellular thylakoid membrane. The enzyme catalyses a plastoquinone + NADH + (n+1) H(+)(in) = a plastoquinol + NAD(+) + n H(+)(out). It catalyses the reaction a plastoquinone + NADPH + (n+1) H(+)(in) = a plastoquinol + NADP(+) + n H(+)(out). In terms of biological role, NDH-1 shuttles electrons from an unknown electron donor, via FMN and iron-sulfur (Fe-S) centers, to quinones in the respiratory and/or the photosynthetic chain. The immediate electron acceptor for the enzyme in this species is believed to be plastoquinone. Couples the redox reaction to proton translocation, and thus conserves the redox energy in a proton gradient. Cyanobacterial NDH-1 also plays a role in inorganic carbon-concentration. This chain is NAD(P)H-quinone oxidoreductase subunit 3 (ndhC), found in Synechocystis sp. (strain ATCC 27184 / PCC 6803 / Kazusa).